We begin with the raw amino-acid sequence, 188 residues long: ATP synthase subunit b 1 (188 aa).

A helical transmembrane segment spans residues V35 to I55.

It belongs to the ATPase B chain family. F-type ATPases have 2 components, F(1) - the catalytic core - and F(0) - the membrane proton channel. F(1) has five subunits: alpha(3), beta(3), gamma(1), delta(1), epsilon(1). F(0) has three main subunits: a(1), b(2) and c(10-14). The alpha and beta chains form an alternating ring which encloses part of the gamma chain. F(1) is attached to F(0) by a central stalk formed by the gamma and epsilon chains, while a peripheral stalk is formed by the delta and b chains.

It localises to the cell inner membrane. In terms of biological role, f(1)F(0) ATP synthase produces ATP from ADP in the presence of a proton or sodium gradient. F-type ATPases consist of two structural domains, F(1) containing the extramembraneous catalytic core and F(0) containing the membrane proton channel, linked together by a central stalk and a peripheral stalk. During catalysis, ATP synthesis in the catalytic domain of F(1) is coupled via a rotary mechanism of the central stalk subunits to proton translocation. Component of the F(0) channel, it forms part of the peripheral stalk, linking F(1) to F(0). This Bartonella henselae (strain ATCC 49882 / DSM 28221 / CCUG 30454 / Houston 1) (Rochalimaea henselae) protein is ATP synthase subunit b 1.